The chain runs to 203 residues: MMTAIAIHPEVLRDVVAAALGDKARSVTVALGEVTVEVSAAQYLEAMQVLHTAPDCRFEVLVDLCGVDYSTYAEVGREGPRFAVVSHLLSISLNQRLRVRVFCTDDDFPVVASVTSVWAGANWFEREAFDLFGIVFDGHDDLRRILTDYGFIGHPFRKDFPLSGHVEMRYDPEQQRVVYQPVTIEPREITPRIIREDNYGGLH.

The protein belongs to the complex I 30 kDa subunit family. In terms of assembly, NDH-1 is composed of 14 different subunits. Subunits NuoB, C, D, E, F, and G constitute the peripheral sector of the complex.

Its subcellular location is the cell inner membrane. It carries out the reaction a quinone + NADH + 5 H(+)(in) = a quinol + NAD(+) + 4 H(+)(out). Its function is as follows. NDH-1 shuttles electrons from NADH, via FMN and iron-sulfur (Fe-S) centers, to quinones in the respiratory chain. The immediate electron acceptor for the enzyme in this species is believed to be ubiquinone. Couples the redox reaction to proton translocation (for every two electrons transferred, four hydrogen ions are translocated across the cytoplasmic membrane), and thus conserves the redox energy in a proton gradient. The chain is NADH-quinone oxidoreductase subunit C from Delftia acidovorans (strain DSM 14801 / SPH-1).